We begin with the raw amino-acid sequence, 831 residues long: Isethionate sulfite-lyase (831 aa).

One can recognise a PFL domain in the interval 32-701 (PRVFRLLERF…VVSATPNGRT (670 aa)). Residues Arg189, Gln193, 468 to 470 (CTE), and Arg679 each bind 2-hydroxyethane-1-sulfonate. Cys468 functions as the Cysteine radical intermediate in the catalytic mechanism. Glu470 (proton acceptor) is an active-site residue. The 124-residue stretch at 708–831 (DGSSASHGAD…LIARTEHDVM (124 aa)) folds into the Glycine radical domain. Glycine radical is present on Gly806.

It belongs to the glycyl radical enzyme (GRE) family. As to quaternary structure, homodimer. Post-translationally, requires the activating protein IslB to generate the key active site glycyl radical on Gly-806 that is involved in catalysis.

The enzyme catalyses 2-hydroxyethane-1-sulfonate = acetaldehyde + sulfite + H(+). Its pathway is organosulfur degradation; alkanesulfonate degradation. Involved in an anaerobic respiration pathway that converts the sulfonate isethionate (2-hydroxyethanesulfonate) to ammonia, acetate and sulfide. Catalyzes the radical-mediated C-S bond cleavage of isethionate (2-hydroxyethanesulfonate) to form sulfite and acetaldehyde. This chain is Isethionate sulfite-lyase, found in Desulfovibrio desulfuricans (strain ATCC 27774 / DSM 6949 / MB).